Here is a 352-residue protein sequence, read N- to C-terminus: Ribosome biogenesis protein BRX1 homolog (352 aa).

The interval 1–55 (MGKFSKIKKVQEEESAHQKMEWEAAGAKDSSSDDSSDESDNDDQPKQATEETRKR) is disordered. Residues 9–22 (KVQEEESAHQKMEW) are compositionally biased toward basic and acidic residues. A compositionally biased stretch (acidic residues) spans 32–42 (SDDSSDESDND). Basic and acidic residues predominate over residues 43–55 (DQPKQATEETRKR). A Brix domain is found at 63 to 253 (ERVLVLCSRG…MVRLFAGSFE (191 aa)).

It belongs to the BRX1 family.

The protein localises to the nucleus. The protein resides in the nucleolus. In terms of biological role, required for biogenesis of the 60S ribosomal subunit. In Caenorhabditis elegans, this protein is Ribosome biogenesis protein BRX1 homolog.